Reading from the N-terminus, the 361-residue chain is tRNA/tmRNA (uracil-C(5))-methyltransferase (361 aa).

S-adenosyl-L-methionine-binding residues include Q183, Y211, N216, E232, and D294. C319 acts as the Nucleophile in catalysis. Residue E353 is the Proton acceptor of the active site.

Belongs to the class I-like SAM-binding methyltransferase superfamily. RNA M5U methyltransferase family. TrmA subfamily.

The enzyme catalyses uridine(54) in tRNA + S-adenosyl-L-methionine = 5-methyluridine(54) in tRNA + S-adenosyl-L-homocysteine + H(+). It carries out the reaction uridine(341) in tmRNA + S-adenosyl-L-methionine = 5-methyluridine(341) in tmRNA + S-adenosyl-L-homocysteine + H(+). In terms of biological role, dual-specificity methyltransferase that catalyzes the formation of 5-methyluridine at position 54 (m5U54) in all tRNAs, and that of position 341 (m5U341) in tmRNA (transfer-mRNA). The chain is tRNA/tmRNA (uracil-C(5))-methyltransferase from Acinetobacter baumannii (strain AYE).